A 331-amino-acid chain; its full sequence is Septin homolog spn2 (331 aa).

Positions 29-301 constitute a Septin-type G domain; the sequence is RGFQFNVMVV…EKFRFKQLSS (273 aa). The tract at residues 39–46 is G1 motif; sequence GPSGSGKS. Residues 39–46, T73, G99, 179–187, G235, and R250 each bind GTP; these read GPSGSGKS and KSDSLTLEE. Positions 96 to 99 are G3 motif; that stretch reads DTPG. Residues 178–181 form a G4 motif region; the sequence is AKSD. The interval 311–331 is disordered; sequence RMGSPAPVYPSEPHLHTATAQ.

This sequence belongs to the TRAFAC class TrmE-Era-EngA-EngB-Septin-like GTPase superfamily. Septin GTPase family. As to quaternary structure, component of the septin complex composed of two copies of each spn1, spn2, spn3 and spn4. Component of the sporulation-specific septin complex composed of at least spn2, spn5, spn6 and spn7.

The protein resides in the cytoplasm. Its subcellular location is the cell cortex. It is found in the forespore membrane. In terms of biological role, plays a role in the cell cycle. Involved in a late stage of septum formation leading to the separation of the daughter cells. Involved in the correct orientation of forespore membrane extension during sporulation. Binds phosphatidylinositol 4-phosphate. The sequence is that of Septin homolog spn2 (spn2) from Schizosaccharomyces pombe (strain 972 / ATCC 24843) (Fission yeast).